A 304-amino-acid polypeptide reads, in one-letter code: Ribosome-inactivating protein 9 (304 aa).

The active site involves Glu-208.

This sequence belongs to the ribosome-inactivating protein family. Type 1 RIP subfamily. Monomer. Accumulates to high levels in seeds.

It localises to the cytoplasm. It catalyses the reaction Endohydrolysis of the N-glycosidic bond at one specific adenosine on the 28S rRNA.. Its function is as follows. Possesses features of some constitutive defense agent. The coordinate Opaque-2-controlled synthesis of this protein and the major seed storage proteins (zeins) may provide the germinating seedling with both nutritional benefits and protection against pathogen invasion of the surrounding endosperm. This Zea mays (Maize) protein is Ribosome-inactivating protein 9 (CRIP9).